The chain runs to 196 residues: Recombination protein RecR (196 aa).

Residues 55–70 form a C4-type zinc finger; that stretch reads CELCGNLESESPCSIC. The region spanning 78 to 173 is the Toprim domain; the sequence is DIVCVVEEIT…KLSFLAHGIP (96 aa).

The protein belongs to the RecR family.

In terms of biological role, may play a role in DNA repair. It seems to be involved in an RecBC-independent recombinational process of DNA repair. It may act with RecF and RecO. The protein is Recombination protein RecR of Neorickettsia sennetsu (strain ATCC VR-367 / Miyayama) (Ehrlichia sennetsu).